A 374-amino-acid chain; its full sequence is Secondary metabolism regulator laeA (374 aa).

The segment at 1–75 (MFEMGPVGTR…NRNGSPSMSP (75 aa)) is disordered. A compositionally biased stretch (polar residues) spans 23–40 (SYHSPTSSDRGRSRQNSD). Met207 carries the S-methylmethionine modification.

Belongs to the methyltransferase superfamily. LaeA methyltransferase family. As to quaternary structure, component of the heterotrimeric velvet complex composed of laeA, veA and velB; VeA acting as a bridging protein between laeA and velB. Self-methylates at Met-207.

The protein localises to the nucleus. It carries out the reaction L-methionyl-[protein] + S-adenosyl-L-methionine = S-methyl-L-methionyl-[protein] + S-adenosyl-L-homocysteine. Methyltransferase that performs automethylation at Met-207. No other methyl-accepting substrate has been identified yet. Component of the velvet transcription factor complex that acts as a global regulator for secondary metabolite gene expression. Controls the expression of the sterigmatocystin, penicillin, and lovastatin gene clusters. Controls light-dependent formation of the velB-vosA complex, veA protein modification, and is required for light-mediated inhibition of sexual development. Within the velvet complex, controls light-dependent secondary metabolism. Involved in the defense response against Drosophila melanogaster larval grazing. In Emericella nidulans (Aspergillus nidulans), this protein is Secondary metabolism regulator laeA.